A 412-amino-acid chain; its full sequence is Adenylosuccinate synthetase (412 aa).

GTP-binding positions include 12-18 (GDEGKGK) and 40-42 (GHE). The active-site Proton acceptor is the Asp13. The Mg(2+) site is built by Asp13 and Gly40. Residues 13-16 (DEGK), 38-41 (NAGH), Arg134, Asn212, Thr227, and Arg291 contribute to the IMP site. The active-site Proton donor is His41. 287–293 (TSTGRRR) lines the substrate pocket. Residues Arg293, 318–320 (KLD), and 400–402 (GTG) each bind GTP.

Belongs to the adenylosuccinate synthetase family. As to quaternary structure, homodimer. It depends on Mg(2+) as a cofactor.

It localises to the cytoplasm. It catalyses the reaction IMP + L-aspartate + GTP = N(6)-(1,2-dicarboxyethyl)-AMP + GDP + phosphate + 2 H(+). The protein operates within purine metabolism; AMP biosynthesis via de novo pathway; AMP from IMP: step 1/2. Functionally, plays an important role in the de novo pathway and in the salvage pathway of purine nucleotide biosynthesis. Catalyzes the first committed step in the biosynthesis of AMP from IMP. This chain is Adenylosuccinate synthetase, found in Fusarium vanettenii (strain ATCC MYA-4622 / CBS 123669 / FGSC 9596 / NRRL 45880 / 77-13-4) (Fusarium solani subsp. pisi).